The chain runs to 296 residues: Homoserine kinase (296 aa).

84–94 (PLARGLGSSSS) provides a ligand contact to ATP.

It belongs to the GHMP kinase family. Homoserine kinase subfamily.

Its subcellular location is the cytoplasm. It catalyses the reaction L-homoserine + ATP = O-phospho-L-homoserine + ADP + H(+). It functions in the pathway amino-acid biosynthesis; L-threonine biosynthesis; L-threonine from L-aspartate: step 4/5. Its function is as follows. Catalyzes the ATP-dependent phosphorylation of L-homoserine to L-homoserine phosphate. This Lactococcus lactis subsp. cremoris (strain SK11) protein is Homoserine kinase.